Consider the following 131-residue polypeptide: MSWQAYVDDHLMCEIEGNHLSAAAIIGQDGSVWAQSANFPQFKSEEITGIMSDFHEPGTLAPTGLYIGGTKYMVIQGEPGAVIRGKKGPGGVTVKKTNQALIIGIYDEPMTPGQCNMIVERLGDYLIDQGY.

Cysteine 13 and cysteine 115 are joined by a disulfide. Residues 81 to 97 (AVIRGKKGPGGVTVKKT) carry the Involved in PIP2 interaction motif. Threonine 111 bears the Phosphothreonine mark.

It belongs to the profilin family. As to quaternary structure, multimer. Occurs in many kinds of cells as a complex with monomeric actin in a 1:1 ratio. Phosphorylated by MAP kinases.

It localises to the cytoplasm. It is found in the cytoskeleton. Binds to actin and affects the structure of the cytoskeleton. At high concentrations, profilin prevents the polymerization of actin, whereas it enhances it at low concentrations. By binding to PIP2, it inhibits the formation of IP3 and DG. This chain is Profilin-2, found in Hevea brasiliensis (Para rubber tree).